Consider the following 466-residue polypeptide: Soluble pyridine nucleotide transhydrogenase (466 aa).

36–45 lines the FAD pocket; that stretch reads ERYHNVGGGC.

It belongs to the class-I pyridine nucleotide-disulfide oxidoreductase family. The cofactor is FAD.

It localises to the cytoplasm. The enzyme catalyses NAD(+) + NADPH = NADH + NADP(+). Conversion of NADPH, generated by peripheral catabolic pathways, to NADH, which can enter the respiratory chain for energy generation. The chain is Soluble pyridine nucleotide transhydrogenase from Klebsiella pneumoniae subsp. pneumoniae (strain ATCC 700721 / MGH 78578).